We begin with the raw amino-acid sequence, 214 residues long: Adenylate kinase (214 aa).

10–15 (GAGKGT) lines the ATP pocket. Positions 30-59 (STGDMLRAAIKEGTPLGLEAKKVMDAGQLI) are NMP. AMP contacts are provided by residues Thr-31, Arg-36, 57–59 (QLI), 85–88 (GFPR), and Gln-92. The interval 122–159 (GRRVHPGSGRVYHVVYNPPKVADKDNETGEELIIRADD) is LID. ATP-binding positions include Arg-123 and 132–133 (VY). Positions 156 and 167 each coordinate AMP. Gln-200 serves as a coordination point for ATP.

Belongs to the adenylate kinase family. In terms of assembly, monomer.

It localises to the cytoplasm. It catalyses the reaction AMP + ATP = 2 ADP. Its pathway is purine metabolism; AMP biosynthesis via salvage pathway; AMP from ADP: step 1/1. Functionally, catalyzes the reversible transfer of the terminal phosphate group between ATP and AMP. Plays an important role in cellular energy homeostasis and in adenine nucleotide metabolism. This Pseudoalteromonas translucida (strain TAC 125) protein is Adenylate kinase.